The chain runs to 83 residues: Toxin CjTL8 (83 aa).

Positions methionine 1–alanine 20 are cleaved as a signal peptide. A propeptide spanning residues lysine 21–arginine 44 is cleaved from the precursor. The residue at position 81 (phenylalanine 81) is a Phenylalanine amide.

In terms of processing, contains 3 disulfide bonds.

It is found in the secreted. The protein localises to the nematocyst. In terms of biological role, in vivo, induces immediate paralysis on shrimps (C.multidentata), followed by death when high doses are injected. No activity is observed when injected into fly larvae (M.domestica). The chain is Toxin CjTL8 from Epiactis japonica (Sea anemone).